A 526-amino-acid chain; its full sequence is Light-independent protochlorophyllide reductase subunit B (526 aa).

Residue Asp36 coordinates [4Fe-4S] cluster. The active-site Proton donor is the Asp290. 425-426 (GL) is a substrate binding site.

Belongs to the ChlB/BchB/BchZ family. Protochlorophyllide reductase is composed of three subunits; ChlL, ChlN and ChlB. Forms a heterotetramer of two ChlB and two ChlN subunits. It depends on [4Fe-4S] cluster as a cofactor.

It carries out the reaction chlorophyllide a + oxidized 2[4Fe-4S]-[ferredoxin] + 2 ADP + 2 phosphate = protochlorophyllide a + reduced 2[4Fe-4S]-[ferredoxin] + 2 ATP + 2 H2O. The protein operates within porphyrin-containing compound metabolism; chlorophyll biosynthesis (light-independent). Component of the dark-operative protochlorophyllide reductase (DPOR) that uses Mg-ATP and reduced ferredoxin to reduce ring D of protochlorophyllide (Pchlide) to form chlorophyllide a (Chlide). This reaction is light-independent. The NB-protein (ChlN-ChlB) is the catalytic component of the complex. The polypeptide is Light-independent protochlorophyllide reductase subunit B (Prochlorococcus marinus (strain MIT 9515)).